Here is a 491-residue protein sequence, read N- to C-terminus: Glutamyl-tRNA(Gln) amidotransferase subunit A (491 aa).

Catalysis depends on charge relay system residues Lys78 and Ser158. Ser182 serves as the catalytic Acyl-ester intermediate.

The protein belongs to the amidase family. GatA subfamily. Heterotrimer of A, B and C subunits.

It catalyses the reaction L-glutamyl-tRNA(Gln) + L-glutamine + ATP + H2O = L-glutaminyl-tRNA(Gln) + L-glutamate + ADP + phosphate + H(+). Its function is as follows. Allows the formation of correctly charged Gln-tRNA(Gln) through the transamidation of misacylated Glu-tRNA(Gln) in organisms which lack glutaminyl-tRNA synthetase. The reaction takes place in the presence of glutamine and ATP through an activated gamma-phospho-Glu-tRNA(Gln). The protein is Glutamyl-tRNA(Gln) amidotransferase subunit A of Bradyrhizobium sp. (strain ORS 278).